The sequence spans 821 residues: Protein SCAR1 (821 aa).

Disordered regions lie at residues 168 to 189 (KRASRASKPSEIKKKKSIQRGR), 205 to 289 (TCTS…RGSS), and 577 to 625 (TSLP…RESK). Polar residues predominate over residues 206-225 (CTSLSFSGRTSTSKTASTIE). The span at 226-250 (IESKSDLQEHRSFSFDSRSGGEKPK) shows a compositional bias: basic and acidic residues. Positions 252–265 (VSSSSRFTPGSRTI) are enriched in polar residues. Positions 592-612 (SSSYISDNSDNDNRSVSMSEQ) are enriched in low complexity. One can recognise a WH2 domain in the interval 756–774 (EAGDFLHQIRTKQFNLRRV). The tract at residues 802–821 (QAVASDDGEGESDTWSDSDT) is disordered. The span at 807 to 821 (DDGEGESDTWSDSDT) shows a compositional bias: acidic residues.

The protein belongs to the SCAR/WAVE family. Binds BRK1 and actin. Interacts with SPK1, ABI1 and ABI2. In terms of tissue distribution, expressed in expanding cotyledons, expanding leaves and expanding siliques containing developing embryos. Detected in unopened flower buds and in the expanding tip region of roots. Reduced expression in mature leaves and mature cotyledons.

It localises to the cytoplasm. The protein localises to the cytoskeleton. In terms of biological role, involved in regulation of actin and microtubule organization. Part of a WAVE complex that activates the Arp2/3 complex. Regulates trichome branch positioning and expansion. The chain is Protein SCAR1 (SCAR1) from Arabidopsis thaliana (Mouse-ear cress).